The sequence spans 1239 residues: Zinc finger and BTB domain-containing protein 40 (1239 aa).

One can recognise a BTB domain in the interval 24 to 87 (CDCTISIGTI…MYTGKLPVGK (64 aa)). Disordered regions lie at residues 130–231 (SAPS…TSTE), 687–732 (HLEA…PDPA), and 779–801 (KELD…PKKK). Positions 136 to 145 (TFRKEPEKPQ) are enriched in basic and acidic residues. Polar residues predominate over residues 181-199 (SVSQEMSVNSPTAQESQRN). Phosphoserine is present on serine 190. Low complexity predominate over residues 200-212 (AETPAETPTTAEA). Over residues 687-703 (HLEANNKEDEKAAKEDS) the composition is skewed to basic and acidic residues. Position 703 is a phosphoserine (serine 703). The span at 705 to 719 (PGEQNDQGETGSLPG) shows a compositional bias: polar residues. C2H2-type zinc fingers lie at residues 807–830 (VTCD…LTEH), 836–858 (FSCE…LRLH), 864–887 (FMCK…KKKH), 893–915 (YACQ…VRTH), 921–944 (YVCR…HTFH), 950–973 (YDCK…HEVH), 978–1000 (HPCP…VVTH), 1006–1029 (FSCG…RTHH), 1046–1069 (LQCS…KAEH), and 1075–1098 (HECD…KCQH). Lysine 1066 participates in a covalent cross-link: Glycyl lysine isopeptide (Lys-Gly) (interchain with G-Cter in SUMO2). A C2H2-type 11; atypical zinc finger spans residues 1104–1127 (FRCLYCAATFRFPGALQHHVTTEH). The C2H2-type 12 zinc-finger motif lies at 1135–1158 (FPCELCGELFTSQAQLDSHLESEH).

It belongs to the krueppel C2H2-type zinc-finger protein family.

It is found in the nucleus. Functionally, may be involved in transcriptional regulation. In Homo sapiens (Human), this protein is Zinc finger and BTB domain-containing protein 40 (ZBTB40).